The sequence spans 416 residues: Serine hydroxymethyltransferase (416 aa).

(6S)-5,6,7,8-tetrahydrofolate is bound by residues Leu119 and 123–125 (GHL). An N6-(pyridoxal phosphate)lysine modification is found at Lys228.

The protein belongs to the SHMT family. Homodimer. The cofactor is pyridoxal 5'-phosphate.

It localises to the cytoplasm. It carries out the reaction (6R)-5,10-methylene-5,6,7,8-tetrahydrofolate + glycine + H2O = (6S)-5,6,7,8-tetrahydrofolate + L-serine. It participates in one-carbon metabolism; tetrahydrofolate interconversion. The protein operates within amino-acid biosynthesis; glycine biosynthesis; glycine from L-serine: step 1/1. Catalyzes the reversible interconversion of serine and glycine with tetrahydrofolate (THF) serving as the one-carbon carrier. This reaction serves as the major source of one-carbon groups required for the biosynthesis of purines, thymidylate, methionine, and other important biomolecules. Also exhibits THF-independent aldolase activity toward beta-hydroxyamino acids, producing glycine and aldehydes, via a retro-aldol mechanism. The polypeptide is Serine hydroxymethyltransferase (Moorella thermoacetica (strain ATCC 39073 / JCM 9320)).